Consider the following 231-residue polypeptide: Maleylacetoacetate isomerase maiA (231 aa).

Residues 7-93 (PKVTLYTYFR…YLEEITPASS (87 aa)) enclose the GST N-terminal domain. The region spanning 102 to 224 (NPEARAVVRT…HWRTQPDTPE (123 aa)) is the GST C-terminal domain.

Belongs to the GST superfamily. Zeta family.

The enzyme catalyses 4-maleylacetoacetate = 4-fumarylacetoacetate. Its pathway is amino-acid degradation; L-phenylalanine degradation; acetoacetate and fumarate from L-phenylalanine: step 5/6. In terms of biological role, maleylacetoacetate isomerase; part of the L-tyrosine degradation gene cluster that mediates the biosynthesis of the brownish pigment pyomelanin as an alternative melanin. The 4-hydroxyphenylpyruvate dioxygenase hppD catalyzes the conversion of 4-hydroxyphenylpyruvate to homogentisic acid (HGA). The protein hmgX is crucial for this conversion and thus, probably functions as an accessory factor to mediate specific activity of hppD. The homogentisate 1,2-dioxygenase hmgA is then involved in the cleavage of the aromatic ring of HGA and its conversion to 4-maleylacetoacetate. When hmgA activity is lowered by the cell wall integrity (CWI) signaling pathway, HGA accumulates and leads to the production of pyomelanin through benzoquinone acetic acid after oxidation and polymerization. On the opposite, in non-stress conditions, both hppD and hmgA activities are balanced and HGA is degraded into 4-maleylacetoacetate. 4-maleylacetoacetate is further converted to 4-fumarylacetoacetate by the maleylacetoacetate isomerase maiA, which is degraded into fumarate and acetoacetate by the fumarylacetoacetase fahA. This Aspergillus fumigatus (strain ATCC MYA-4609 / CBS 101355 / FGSC A1100 / Af293) (Neosartorya fumigata) protein is Maleylacetoacetate isomerase maiA.